A 243-amino-acid polypeptide reads, in one-letter code: MPVYRDEGVVLRTAPLAEADRIITVLTRRTGRVRAVAKGVRKTSSRFGSRLEPGTYVDLLLHSGRALDTVTQADIISPYGATIAVDYPRYTAAAVMLETAERLTSEERQPALRLFLLLVGGLRTLAGDERPPALVLDAFLLRALAVSGYGMALDHCARCGGPGLHLSLSVPGGGVVCPQCRPHGAASVSAGAVRLLADLLRGDWDGALVSDARARREAGGIAAAYLQWHLERGLRALPYLERA.

The protein belongs to the RecO family.

Functionally, involved in DNA repair and RecF pathway recombination. In Frankia casuarinae (strain DSM 45818 / CECT 9043 / HFP020203 / CcI3), this protein is DNA repair protein RecO.